Reading from the N-terminus, the 317-residue chain is 1-phosphofructokinase (317 aa).

Residues 223–228 (SMGAEG) and 254–255 (GD) each bind ATP. Aspartate 255 (proton acceptor) is an active-site residue.

It belongs to the carbohydrate kinase PfkB family.

The catalysed reaction is beta-D-fructose 1-phosphate + ATP = beta-D-fructose 1,6-bisphosphate + ADP + H(+). In terms of biological role, catalyzes the ATP-dependent phosphorylation of fructose-l-phosphate to fructose-l,6-bisphosphate. The chain is 1-phosphofructokinase from Vibrio cholerae serotype O1 (strain ATCC 39315 / El Tor Inaba N16961).